We begin with the raw amino-acid sequence, 377 residues long: 23S rRNA (uracil(747)-C(5))-methyltransferase RlmC (377 aa).

Residues cysteine 3, cysteine 11, cysteine 14, and cysteine 87 each contribute to the [4Fe-4S] cluster site. Residues glutamine 212, phenylalanine 241, glutamate 262, and asparagine 307 each contribute to the S-adenosyl-L-methionine site. The active-site Nucleophile is cysteine 334.

The protein belongs to the class I-like SAM-binding methyltransferase superfamily. RNA M5U methyltransferase family. RlmC subfamily.

It catalyses the reaction uridine(747) in 23S rRNA + S-adenosyl-L-methionine = 5-methyluridine(747) in 23S rRNA + S-adenosyl-L-homocysteine + H(+). In terms of biological role, catalyzes the formation of 5-methyl-uridine at position 747 (m5U747) in 23S rRNA. This chain is 23S rRNA (uracil(747)-C(5))-methyltransferase RlmC, found in Proteus mirabilis (strain HI4320).